The chain runs to 238 residues: Cadherin-2 (238 aa).

Cadherin domains are found at residues 1-46 (TKPL…RPEF), 47-161 (LHQV…PPEF), and 162-238 (TAMT…RMFV). Residues 1 to 238 (TKPLDRELIA…IDFETNRMFV (238 aa)) lie on the Extracellular side of the membrane. 7 residues coordinate Ca(2+): D5, E7, D38, M39, N40, D41, and N42. An N-linked (GlcNAc...) asparagine glycan is attached at N52. Residues D72, D74, and N80 each coordinate Ca(2+). N104 is a glycosylation site (N-linked (GlcNAc...) asparagine). Residue D132 coordinates Ca(2+). N181 carries an N-linked (GlcNAc...) asparagine glycan.

In terms of assembly, homodimer (via extracellular region). Can also form heterodimers with other cadherins (via extracellular region). Dimerization occurs in trans, i.e. with a cadherin chain from another cell. Interacts with CDCP1. Interacts with PCDH8; this complex may also include TAOK2. The interaction with PCDH8 may lead to internalization through TAOK2/p38 MAPK pathway. Identified in a complex containing FGFR4, NCAM1, CDH2, PLCG1, FRS2, SRC, SHC1, GAP43 and CTTN. May interact with OBSCN (via protein kinase domain 2). Cleaved by MMP24. Ectodomain cleavage leads to the generation of a soluble 90 kDa N-terminal soluble fragment and a 45 kDa membrane-bound C-terminal fragment 1 (CTF1), which is further cleaved by gamma-secretase into a 35 kDa. Cleavage in neural stem cells by MMP24 affects CDH2-mediated anchorage of neural stem cells to ependymocytes in the adult subependymal zone, leading to modulate neural stem cell quiescence. Post-translationally, may be phosphorylated by OBSCN.

The protein resides in the cell membrane. Its subcellular location is the sarcolemma. It localises to the cell junction. It is found in the cell surface. The protein localises to the desmosome. The protein resides in the adherens junction. Calcium-dependent cell adhesion protein; preferentially mediates homotypic cell-cell adhesion by dimerization with a CDH2 chain from another cell. Cadherins may thus contribute to the sorting of heterogeneous cell types. Acts as a regulator of neural stem cells quiescence by mediating anchorage of neural stem cells to ependymocytes in the adult subependymal zone: upon cleavage by MMP24, CDH2-mediated anchorage is affected, leading to modulate neural stem cell quiescence. Plays a role in cell-to-cell junction formation between pancreatic beta cells and neural crest stem (NCS) cells, promoting the formation of processes by NCS cells. Required for proper neurite branching. Required for pre- and postsynaptic organization. CDH2 may be involved in neuronal recognition mechanism. In hippocampal neurons, may regulate dendritic spine density. This chain is Cadherin-2 (CDH2), found in Cricetulus griseus (Chinese hamster).